A 785-amino-acid chain; its full sequence is Phenylalanine--tRNA ligase beta subunit (785 aa).

The region spanning 39 to 148 (APAFSGVVIA…ADAPVGQSIR (110 aa)) is the tRNA-binding domain. In terms of domain architecture, B5 spans 399 to 474 (PKRQAVQLRA…RVYGYNNIPA (76 aa)). 4 residues coordinate Mg(2+): Asp-452, Asp-458, Glu-461, and Glu-462. The FDX-ACB domain occupies 692–784 (SKFQPVRRDL…AASELGAQLR (93 aa)).

It belongs to the phenylalanyl-tRNA synthetase beta subunit family. Type 1 subfamily. In terms of assembly, tetramer of two alpha and two beta subunits. It depends on Mg(2+) as a cofactor.

It localises to the cytoplasm. The catalysed reaction is tRNA(Phe) + L-phenylalanine + ATP = L-phenylalanyl-tRNA(Phe) + AMP + diphosphate + H(+). This chain is Phenylalanine--tRNA ligase beta subunit, found in Chromobacterium violaceum (strain ATCC 12472 / DSM 30191 / JCM 1249 / CCUG 213 / NBRC 12614 / NCIMB 9131 / NCTC 9757 / MK).